A 365-amino-acid polypeptide reads, in one-letter code: 2-aminoethylphosphonate--pyruvate transaminase (365 aa).

The residue at position 194 (Lys194) is an N6-(pyridoxal phosphate)lysine.

The protein belongs to the class-V pyridoxal-phosphate-dependent aminotransferase family. PhnW subfamily. Homodimer. Requires pyridoxal 5'-phosphate as cofactor.

The enzyme catalyses (2-aminoethyl)phosphonate + pyruvate = phosphonoacetaldehyde + L-alanine. In terms of biological role, involved in phosphonate degradation. This chain is 2-aminoethylphosphonate--pyruvate transaminase, found in Bacillus cereus (strain ZK / E33L).